The primary structure comprises 240 residues: Probable septum site-determining protein MinC (240 aa).

It belongs to the MinC family. In terms of assembly, interacts with MinD and FtsZ.

Its function is as follows. Cell division inhibitor that blocks the formation of polar Z ring septums. Rapidly oscillates between the poles of the cell to destabilize FtsZ filaments that have formed before they mature into polar Z rings. Prevents FtsZ polymerization. The chain is Probable septum site-determining protein MinC from Chromobacterium violaceum (strain ATCC 12472 / DSM 30191 / JCM 1249 / CCUG 213 / NBRC 12614 / NCIMB 9131 / NCTC 9757 / MK).